Reading from the N-terminus, the 131-residue chain is Large ribosomal subunit protein bL17 (131 aa).

This sequence belongs to the bacterial ribosomal protein bL17 family. As to quaternary structure, part of the 50S ribosomal subunit. Contacts protein L32.

This chain is Large ribosomal subunit protein bL17, found in Shewanella amazonensis (strain ATCC BAA-1098 / SB2B).